Here is a 420-residue protein sequence, read N- to C-terminus: D-tagatose-1,6-bisphosphate aldolase subunit GatZ (420 aa).

The protein belongs to the GatZ/KbaZ family. GatZ subfamily. In terms of assembly, forms a complex with GatY.

Its pathway is carbohydrate metabolism; D-tagatose 6-phosphate degradation; D-glyceraldehyde 3-phosphate and glycerone phosphate from D-tagatose 6-phosphate: step 2/2. Component of the tagatose-1,6-bisphosphate aldolase GatYZ that is required for full activity and stability of the Y subunit. Could have a chaperone-like function for the proper and stable folding of GatY. When expressed alone, GatZ does not show any aldolase activity. Is involved in the catabolism of galactitol. The polypeptide is D-tagatose-1,6-bisphosphate aldolase subunit GatZ (Escherichia coli O8 (strain IAI1)).